The chain runs to 186 residues: MIKIGVLALQGAVREHIRHIELSGYEGIAIKRVEQLDEIDGLILPGGESTTLRRLMDLYGFKEKLQQLDLPMFGTCAGLIVLAKNVENESGYLNKLDITVERNSFGRQVDSFESELDIKGIANDIEGVFIRAPHIAKVDNGVEILSKVGGKIVAVKQGQYLGVSFHPELTDDYRITKYFIEHMIKH.

Residue 47 to 49 (GES) participates in L-glutamine binding. The active-site Nucleophile is cysteine 76. Residues arginine 102 and 130 to 131 (IR) contribute to the L-glutamine site. Catalysis depends on charge relay system residues histidine 166 and glutamate 168.

This sequence belongs to the glutaminase PdxT/SNO family. As to quaternary structure, in the presence of PdxS, forms a dodecamer of heterodimers. Only shows activity in the heterodimer.

It catalyses the reaction aldehydo-D-ribose 5-phosphate + D-glyceraldehyde 3-phosphate + L-glutamine = pyridoxal 5'-phosphate + L-glutamate + phosphate + 3 H2O + H(+). It carries out the reaction L-glutamine + H2O = L-glutamate + NH4(+). It functions in the pathway cofactor biosynthesis; pyridoxal 5'-phosphate biosynthesis. Its function is as follows. Catalyzes the hydrolysis of glutamine to glutamate and ammonia as part of the biosynthesis of pyridoxal 5'-phosphate. The resulting ammonia molecule is channeled to the active site of PdxS. The sequence is that of Pyridoxal 5'-phosphate synthase subunit PdxT from Staphylococcus epidermidis (strain ATCC 35984 / DSM 28319 / BCRC 17069 / CCUG 31568 / BM 3577 / RP62A).